We begin with the raw amino-acid sequence, 369 residues long: MAPTKDFSTTTTNGAESWDDVADFVTKKGHGVKGLSERGIKTLPKPFHQPLEERFSEKKILERASIPLIDMSQWDSPEVVKSICDAAENWGFFQIVNHGVPLETLERVKEATHRFFGLPAEEKNNYSKENSPINNVRFGSSFVPHVEKALEWKDFLSMFYVSEEETNTYWPPICRDEMLEYMRSSEVLIQRLMEVLVVKGLKVKQIDEIREPMLVGSRRINLNYYPKCPNPELTLGVGRHSDISTFTILLQDQIGGLHVRKLDDTGNTWVHVTPIAGSLIINIGDALQIMSNGRYKSIEHMVVANGTQDRISVPLFVNPKPQAILCPFPEVLANGEKPVYKPVFCSDYSRHFYTKPHDGKKTVDVAMIN.

One can recognise a Fe2OG dioxygenase domain in the interval 209–319 (IREPMLVGSR…RISVPLFVNP (111 aa)). Tyrosine 225 contacts 2-oxoglutarate. 3 residues coordinate Fe cation: histidine 240, aspartate 242, and histidine 300. 2 residues coordinate 2-oxoglutarate: arginine 310 and serine 312.

Belongs to the iron/ascorbate-dependent oxidoreductase family. L-ascorbate serves as cofactor. Requires Fe(2+) as cofactor.

The catalysed reaction is (E)-4-coumaroyl-CoA + 2-oxoglutarate + O2 = (E)-2,4-dihydroxycinnamoyl-CoA + succinate + CO2. It carries out the reaction (E)-feruloyl-CoA + 2-oxoglutarate + O2 = (E)-6-hydroxyferuloyl-CoA + succinate + CO2. It participates in phenylpropanoid metabolism. Functionally, 2-oxoglutarate (OG)- and Fe(II)-dependent dioxygenase (2OGD) involved in scopoletin and umbelliferone biosynthesis. Converts feruloyl CoA into 6'-hydroxyferuloyl CoA, and p-coumaroyl CoA into 2,4-dihydroxycinnamoyl-CoA. This chain is Bi-functional coumaroyl CoA and feruloyl CoA ortho-hydroxylase Diox1, found in Ruta graveolens (Common rue).